Here is a 348-residue protein sequence, read N- to C-terminus: Methylthioribose-1-phosphate isomerase (348 aa).

Residues 48-50, Arg90, and Gln195 each bind substrate; that span reads RGA. The active-site Proton donor is Asp236. 246–247 contributes to the substrate binding site; it reads NK.

It belongs to the eIF-2B alpha/beta/delta subunits family. MtnA subfamily.

It carries out the reaction 5-(methylsulfanyl)-alpha-D-ribose 1-phosphate = 5-(methylsulfanyl)-D-ribulose 1-phosphate. The protein operates within amino-acid biosynthesis; L-methionine biosynthesis via salvage pathway; L-methionine from S-methyl-5-thio-alpha-D-ribose 1-phosphate: step 1/6. Its function is as follows. Catalyzes the interconversion of methylthioribose-1-phosphate (MTR-1-P) into methylthioribulose-1-phosphate (MTRu-1-P). This is Methylthioribose-1-phosphate isomerase from Exiguobacterium sibiricum (strain DSM 17290 / CCUG 55495 / CIP 109462 / JCM 13490 / 255-15).